We begin with the raw amino-acid sequence, 286 residues long: Putative L-ribulose-5-phosphate 3-epimerase SgbU (286 aa).

Belongs to the L-ribulose-5-phosphate 3-epimerase family.

It catalyses the reaction L-ribulose 5-phosphate = L-xylulose 5-phosphate. Catalyzes the isomerization of L-xylulose-5-phosphate to L-ribulose-5-phosphate. The protein is Putative L-ribulose-5-phosphate 3-epimerase SgbU (sgbU) of Haemophilus influenzae (strain ATCC 51907 / DSM 11121 / KW20 / Rd).